We begin with the raw amino-acid sequence, 283 residues long: Pantothenate synthetase (283 aa).

An ATP-binding site is contributed by 26 to 33 (MGNLHEGH). Histidine 33 functions as the Proton donor in the catalytic mechanism. Glutamine 57 is a binding site for (R)-pantoate. Residue glutamine 57 coordinates beta-alanine. An ATP-binding site is contributed by 144-147 (GKKD). (R)-pantoate is bound at residue glutamine 150. 181-184 (LSSR) contributes to the ATP binding site.

The protein belongs to the pantothenate synthetase family. Homodimer.

The protein localises to the cytoplasm. It carries out the reaction (R)-pantoate + beta-alanine + ATP = (R)-pantothenate + AMP + diphosphate + H(+). It functions in the pathway cofactor biosynthesis; (R)-pantothenate biosynthesis; (R)-pantothenate from (R)-pantoate and beta-alanine: step 1/1. Catalyzes the condensation of pantoate with beta-alanine in an ATP-dependent reaction via a pantoyl-adenylate intermediate. The protein is Pantothenate synthetase of Variovorax paradoxus (strain S110).